The chain runs to 255 residues: Fasciclin-like arabinogalactan protein 14 (255 aa).

The signal sequence occupies residues 1–23; the sequence is MSSSLTIFFFFFASTFLYTSSNS. Positions 24–169 constitute an FAS1 domain; it reads FNITNILNEH…ISVLHISSAI (146 aa). N-linked (GlcNAc...) asparagine glycans are attached at residues Asn25, Asn99, Asn125, and Asn159. Positions 179 to 231 are disordered; it reads PTASPLSPVSSPPRPAESPNDDGQDFDEPPSSAPGAAADEPSENAGSANGVSR. The segment covering 197 to 206 has biased composition (acidic residues); the sequence is PNDDGQDFDE. Over residues 222 to 231 the composition is skewed to polar residues; that stretch reads NAGSANGVSR. Ser225 carries the GPI-anchor amidated serine lipid modification. The propeptide at 226–255 is removed in mature form; that stretch reads ANGVSRNDSQPAFAFTLLMSFIWWFMARLR.

Belongs to the fasciclin-like AGP family.

Its subcellular location is the cell membrane. Functionally, may be a cell surface adhesion protein. The sequence is that of Fasciclin-like arabinogalactan protein 14 (FLA14) from Arabidopsis thaliana (Mouse-ear cress).